The following is a 467-amino-acid chain: Replication factor C large subunit (467 aa).

47–54 lines the ATP pocket; that stretch reads GPPGVGKT.

The protein belongs to the activator 1 small subunits family. RfcL subfamily. In terms of assembly, heteromultimer composed of small subunits (RfcS) and large subunits (RfcL).

In terms of biological role, part of the RFC clamp loader complex which loads the PCNA sliding clamp onto DNA. This chain is Replication factor C large subunit, found in Methanothrix thermoacetophila (strain DSM 6194 / JCM 14653 / NBRC 101360 / PT) (Methanosaeta thermophila).